The following is a 121-amino-acid chain: Large ribosomal subunit protein eL31 (121 aa).

It belongs to the eukaryotic ribosomal protein eL31 family.

The polypeptide is Large ribosomal subunit protein eL31 (RPL31) (Panax ginseng (Korean ginseng)).